The following is a 1264-amino-acid chain: Valine--tRNA ligase (1264 aa).

Ser2 carries the post-translational modification N-acetylserine. The region spanning 89–219 is the GST C-terminal domain; sequence GSRAAVLVQQ…YSGARPLSHQ (131 aa). Residues 217–296 are disordered; that stretch reads SHQPGPEAPA…GEKKDVSGPM (80 aa). Basic and acidic residues-rich tracts occupy residues 234-248 and 261-275; these read LKKEAKKREKLEKFQ and GEKKPKPEKREKRDP. Positions 344–354 match the 'HIGH' region motif; sequence PNVTGSLHLGH. Phosphoserine occurs at positions 437 and 527. At Lys645 the chain carries N6-acetyllysine. Positions 862–866 match the 'KMSKS' region motif; it reads KMSKS. Lys865 is a binding site for ATP.

Belongs to the class-I aminoacyl-tRNA synthetase family. In terms of assembly, forms high-molecular-mass aggregates with elongation factor 1.

The catalysed reaction is tRNA(Val) + L-valine + ATP = L-valyl-tRNA(Val) + AMP + diphosphate. With respect to regulation, can be regulated by protein kinase C-dependent phosphorylation. Its function is as follows. Catalyzes the attachment of valine to tRNA(Val). The polypeptide is Valine--tRNA ligase (Homo sapiens (Human)).